A 203-amino-acid chain; its full sequence is MLMFTEKEFAAFEVAGLDERMAVIRAQIQPIFQELDTYFAEQLAPELGTELFVHIAQHRRRTVYPPENTWSALSPNKRGYKMQPHFQLGIWGDYVFMWLSFIDNPKNEKQIAQAFLENQQLFQALPEDTYVSLDHTVPQITPLPETDLEKALTRFRDVKKGEFEIGRIIPKDSDLWQNPEKARAYMLATYQQLLPLYQLAVAQ.

The protein belongs to the UPF0637 family.

The protein is UPF0637 protein EF_3078 of Enterococcus faecalis (strain ATCC 700802 / V583).